The sequence spans 1179 residues: ATP-dependent helicase/deoxyribonuclease subunit B (1179 aa).

This sequence belongs to the helicase family. AddB/RexB type 2 subfamily. Heterodimer of AddA and RexB. Requires Mg(2+) as cofactor.

Its function is as follows. The heterodimer acts as both an ATP-dependent DNA helicase and an ATP-dependent, dual-direction single-stranded exonuclease. Recognizes the chi site generating a DNA molecule suitable for the initiation of homologous recombination. This subunit has 5' -&gt; 3' nuclease activity but not helicase activity. The protein is ATP-dependent helicase/deoxyribonuclease subunit B of Lactobacillus delbrueckii subsp. bulgaricus (strain ATCC BAA-365 / Lb-18).